A 142-amino-acid chain; its full sequence is 3-hydroxyacyl-[acyl-carrier-protein] dehydratase FabZ (142 aa).

His-48 is a catalytic residue.

It belongs to the thioester dehydratase family. FabZ subfamily.

The protein resides in the cytoplasm. It catalyses the reaction a (3R)-hydroxyacyl-[ACP] = a (2E)-enoyl-[ACP] + H2O. Involved in unsaturated fatty acids biosynthesis. Catalyzes the dehydration of short chain beta-hydroxyacyl-ACPs and long chain saturated and unsaturated beta-hydroxyacyl-ACPs. The protein is 3-hydroxyacyl-[acyl-carrier-protein] dehydratase FabZ of Anoxybacillus flavithermus (strain DSM 21510 / WK1).